A 375-amino-acid chain; its full sequence is Homoserine O-succinyltransferase (375 aa).

Residues 48 to 358 (NAVLVCHALS…DAGHDSFLLD (311 aa)) form the AB hydrolase-1 domain. The Nucleophile role is filled by Ser154. Arg224 is a substrate binding site. Catalysis depends on residues Asp319 and His352. Position 353 (Asp353) interacts with substrate.

This sequence belongs to the AB hydrolase superfamily. MetX family. In terms of assembly, homodimer.

The protein resides in the cytoplasm. It catalyses the reaction L-homoserine + succinyl-CoA = O-succinyl-L-homoserine + CoA. The protein operates within amino-acid biosynthesis; L-methionine biosynthesis via de novo pathway; O-succinyl-L-homoserine from L-homoserine: step 1/1. Its function is as follows. Transfers a succinyl group from succinyl-CoA to L-homoserine, forming succinyl-L-homoserine. The sequence is that of Homoserine O-succinyltransferase from Aromatoleum aromaticum (strain DSM 19018 / LMG 30748 / EbN1) (Azoarcus sp. (strain EbN1)).